The sequence spans 318 residues: Acetyl-coenzyme A carboxylase carboxyl transferase subunit alpha (318 aa).

The region spanning 38 to 292 is the CoA carboxyltransferase C-terminal domain; it reads KLEKRLAKLE…NKTITKSLHA (255 aa).

Belongs to the AccA family. In terms of assembly, acetyl-CoA carboxylase is a heterohexamer composed of biotin carboxyl carrier protein (AccB), biotin carboxylase (AccC) and two subunits each of ACCase subunit alpha (AccA) and ACCase subunit beta (AccD).

Its subcellular location is the cytoplasm. It catalyses the reaction N(6)-carboxybiotinyl-L-lysyl-[protein] + acetyl-CoA = N(6)-biotinyl-L-lysyl-[protein] + malonyl-CoA. The protein operates within lipid metabolism; malonyl-CoA biosynthesis; malonyl-CoA from acetyl-CoA: step 1/1. In terms of biological role, component of the acetyl coenzyme A carboxylase (ACC) complex. First, biotin carboxylase catalyzes the carboxylation of biotin on its carrier protein (BCCP) and then the CO(2) group is transferred by the carboxyltransferase to acetyl-CoA to form malonyl-CoA. The polypeptide is Acetyl-coenzyme A carboxylase carboxyl transferase subunit alpha (Listeria monocytogenes serotype 4b (strain CLIP80459)).